The chain runs to 629 residues: tRNA uridine 5-carboxymethylaminomethyl modification enzyme MnmG (629 aa).

13–18 contacts FAD; sequence GGGHAG. 273 to 287 provides a ligand contact to NAD(+); sequence GPRYCPSIEDKINRF.

Belongs to the MnmG family. As to quaternary structure, homodimer. Heterotetramer of two MnmE and two MnmG subunits. FAD is required as a cofactor.

It is found in the cytoplasm. NAD-binding protein involved in the addition of a carboxymethylaminomethyl (cmnm) group at the wobble position (U34) of certain tRNAs, forming tRNA-cmnm(5)s(2)U34. The sequence is that of tRNA uridine 5-carboxymethylaminomethyl modification enzyme MnmG from Shewanella piezotolerans (strain WP3 / JCM 13877).